A 136-amino-acid polypeptide reads, in one-letter code: uncharacterized protein (136 aa).

This is an uncharacterized protein from Fowl adenovirus A serotype 1 (strain CELO / Phelps) (FAdV-1).